A 308-amino-acid chain; its full sequence is Peroxisomal targeting signal 2 receptor (308 aa).

WD repeat units follow at residues 57-88 (DVED…RLFD), 101-132 (EHKA…KLWL), 145-176 (GSNS…KFWD), 187-218 (EIPN…YCYD), 231-262 (GHQL…RIFD), and 274-306 (LHSE…YIWN).

It belongs to the WD repeat peroxin-7 family. Interacts with PEX21.

Its subcellular location is the cytoplasm. It localises to the cytosol. The protein localises to the peroxisome matrix. Its function is as follows. Receptor required for the peroxisomal import of proteins containing a C-terminal PTS2-type peroxisomal targeting signal, such as 3-oxoacyl-CoA thiolase. Specifically binds to cargo proteins containing a PTS2 peroxisomal targeting signal in the cytosol. Cargo protein-binding triggers interaction with PEX21 and formation of a ternary complex composed of PEX21 and PEX7 along with PTS2-containing cargo proteins, which is tranlocated into peroxisomes by passing through the PEX13-PEX14 docking complex. The sequence is that of Peroxisomal targeting signal 2 receptor (pex7) from Schizosaccharomyces pombe (strain 972 / ATCC 24843) (Fission yeast).